A 237-amino-acid polypeptide reads, in one-letter code: Aspartate/glutamate leucyltransferase (237 aa).

Belongs to the R-transferase family. Bpt subfamily.

The protein localises to the cytoplasm. It catalyses the reaction N-terminal L-glutamyl-[protein] + L-leucyl-tRNA(Leu) = N-terminal L-leucyl-L-glutamyl-[protein] + tRNA(Leu) + H(+). The enzyme catalyses N-terminal L-aspartyl-[protein] + L-leucyl-tRNA(Leu) = N-terminal L-leucyl-L-aspartyl-[protein] + tRNA(Leu) + H(+). In terms of biological role, functions in the N-end rule pathway of protein degradation where it conjugates Leu from its aminoacyl-tRNA to the N-termini of proteins containing an N-terminal aspartate or glutamate. In Shewanella amazonensis (strain ATCC BAA-1098 / SB2B), this protein is Aspartate/glutamate leucyltransferase.